A 249-amino-acid polypeptide reads, in one-letter code: Probable transcriptional regulatory protein Tgr7_2237 (249 aa).

This sequence belongs to the TACO1 family.

It localises to the cytoplasm. This Thioalkalivibrio sulfidiphilus (strain HL-EbGR7) protein is Probable transcriptional regulatory protein Tgr7_2237.